A 544-amino-acid polypeptide reads, in one-letter code: Probable protein kinase UbiB (544 aa).

One can recognise a Protein kinase domain in the interval Asp123–Leu501. ATP is bound by residues Leu129–Val137 and Lys152. Asp287 serves as the catalytic Proton acceptor. The next 2 helical transmembrane spans lie at Ala496–Val516 and Thr519–Trp539.

The protein belongs to the ABC1 family. UbiB subfamily.

The protein localises to the cell inner membrane. It participates in cofactor biosynthesis; ubiquinone biosynthesis [regulation]. Functionally, is probably a protein kinase regulator of UbiI activity which is involved in aerobic coenzyme Q (ubiquinone) biosynthesis. In Vibrio vulnificus (strain CMCP6), this protein is Probable protein kinase UbiB.